Here is a 427-residue protein sequence, read N- to C-terminus: Histidinol dehydrogenase (427 aa).

NAD(+) contacts are provided by tyrosine 127, glutamine 185, and asparagine 208. Serine 232, glutamine 254, and histidine 257 together coordinate substrate. Positions 254 and 257 each coordinate Zn(2+). Active-site proton acceptor residues include glutamate 321 and histidine 322. 4 residues coordinate substrate: histidine 322, aspartate 355, glutamate 409, and histidine 414. Aspartate 355 contributes to the Zn(2+) binding site. Residue histidine 414 coordinates Zn(2+).

This sequence belongs to the histidinol dehydrogenase family. The cofactor is Zn(2+).

It carries out the reaction L-histidinol + 2 NAD(+) + H2O = L-histidine + 2 NADH + 3 H(+). The protein operates within amino-acid biosynthesis; L-histidine biosynthesis; L-histidine from 5-phospho-alpha-D-ribose 1-diphosphate: step 9/9. Its function is as follows. Catalyzes the sequential NAD-dependent oxidations of L-histidinol to L-histidinaldehyde and then to L-histidine. The sequence is that of Histidinol dehydrogenase from Haemophilus influenzae (strain 86-028NP).